The following is a 1487-amino-acid chain: Chromosome partition protein MukB (1487 aa).

Residue glycine 34 to serine 41 coordinates ATP. Coiled coils occupy residues glycine 297–leucine 458, arginine 506–isoleucine 601, leucine 637–serine 666, arginine 781–alanine 806, glutamate 836–threonine 1109, and valine 1210–isoleucine 1266. The segment at proline 667 to arginine 784 is flexible hinge.

This sequence belongs to the SMC family. MukB subfamily. In terms of assembly, homodimerization via its hinge domain. Binds to DNA via its C-terminal region. Interacts, and probably forms a ternary complex, with MukE and MukF via its C-terminal region. The complex formation is stimulated by calcium or magnesium. Interacts with tubulin-related protein FtsZ.

It localises to the cytoplasm. The protein resides in the nucleoid. In terms of biological role, plays a central role in chromosome condensation, segregation and cell cycle progression. Functions as a homodimer, which is essential for chromosome partition. Involved in negative DNA supercoiling in vivo, and by this means organize and compact chromosomes. May achieve or facilitate chromosome segregation by condensation DNA from both sides of a centrally located replisome during cell division. This Vibrio parahaemolyticus serotype O3:K6 (strain RIMD 2210633) protein is Chromosome partition protein MukB.